The following is a 524-amino-acid chain: Peptide chain release factor 3 (524 aa).

The 267-residue stretch at 9–275 folds into the tr-type G domain; it reads SRRRTFAIIS…AVVDLSPPPI (267 aa). GTP is bound by residues 18–25, 86–90, and 140–143; these read SHPDAGKT, DTPGH, and NKLD.

It belongs to the TRAFAC class translation factor GTPase superfamily. Classic translation factor GTPase family. PrfC subfamily.

It is found in the cytoplasm. Functionally, increases the formation of ribosomal termination complexes and stimulates activities of RF-1 and RF-2. It binds guanine nucleotides and has strong preference for UGA stop codons. It may interact directly with the ribosome. The stimulation of RF-1 and RF-2 is significantly reduced by GTP and GDP, but not by GMP. This is Peptide chain release factor 3 from Dechloromonas aromatica (strain RCB).